The following is a 264-amino-acid chain: Thymidylate synthase (264 aa).

R21 lines the dUMP pocket. H51 serves as a coordination point for (6R)-5,10-methylene-5,6,7,8-tetrahydrofolate. 126 to 127 (RR) serves as a coordination point for dUMP. Residue C146 is the Nucleophile of the active site. Residues 166–169 (RSAD), N177, and 207–209 (HLY) each bind dUMP. Residue D169 coordinates (6R)-5,10-methylene-5,6,7,8-tetrahydrofolate. Residue A263 participates in (6R)-5,10-methylene-5,6,7,8-tetrahydrofolate binding.

The protein belongs to the thymidylate synthase family. Bacterial-type ThyA subfamily. As to quaternary structure, homodimer.

The protein localises to the cytoplasm. It catalyses the reaction dUMP + (6R)-5,10-methylene-5,6,7,8-tetrahydrofolate = 7,8-dihydrofolate + dTMP. Its pathway is pyrimidine metabolism; dTTP biosynthesis. Functionally, catalyzes the reductive methylation of 2'-deoxyuridine-5'-monophosphate (dUMP) to 2'-deoxythymidine-5'-monophosphate (dTMP) while utilizing 5,10-methylenetetrahydrofolate (mTHF) as the methyl donor and reductant in the reaction, yielding dihydrofolate (DHF) as a by-product. This enzymatic reaction provides an intracellular de novo source of dTMP, an essential precursor for DNA biosynthesis. The chain is Thymidylate synthase from Methylobacterium nodulans (strain LMG 21967 / CNCM I-2342 / ORS 2060).